A 381-amino-acid chain; its full sequence is Creatine kinase B-type (381 aa).

Serine 4 is subject to Phosphoserine. A Phosphagen kinase N-terminal domain is found at 11-98; sequence KLRFPAEDEF…FDPIIEDRHG (88 aa). A Phosphothreonine modification is found at threonine 35. Lysine 45 is covalently cross-linked (Glycyl lysine isopeptide (Lys-Gly) (interchain with G-Cter in ubiquitin)). Position 72 (valine 72) interacts with creatine. Positions 96 to 110 are enriched in basic and acidic residues; sequence RHGGYKPSDEHKTDL. Residues 96–123 are disordered; that stretch reads RHGGYKPSDEHKTDLNPDNLQGGDDLDP. Glycyl lysine isopeptide (Lys-Gly) (interchain with G-Cter in ubiquitin) cross-links involve residues lysine 101 and lysine 107. Position 125 is a phosphotyrosine (tyrosine 125). The region spanning 125–367 is the Phosphagen kinase C-terminal domain; it reads YVLSSRVRTG…KLLIEMEQRL (243 aa). ATP is bound by residues 128 to 132, arginine 130, arginine 132, and histidine 191; that span reads SSRVR. Positions 130 to 138 are internal MTS-like signal; it reads RVRTGRSIR. Serine 199 is subject to Phosphoserine. Residue glutamate 232 coordinates creatine. Arginine 236 serves as a coordination point for ATP. Tyrosine 269 is modified (3'-nitrotyrosine). Residue serine 285 participates in creatine binding. ATP is bound by residues arginine 292, 292–296, arginine 320, 320–325, and aspartate 335; these read RAGVH and RGTGGV. Threonine 322 is subject to Phosphothreonine. Lysine 381 is covalently cross-linked (Glycyl lysine isopeptide (Lys-Gly) (interchain with G-Cter in ubiquitin)).

The protein belongs to the ATP:guanido phosphotransferase family. Dimer of identical or non-identical chains, which can be either B (brain type) or M (muscle type). With MM being the major form in skeletal muscle and myocardium, MB existing in myocardium, and BB existing in many tissues, especially brain. Interacts with SLC12A6 (via C-terminus); the interaction may be required for SLC12A6 potassium-chloride cotransport activity. In terms of processing, ubiquitinated by the ECS(ASB9) complex, leading to its degradation by the proteasome.

The protein localises to the cytoplasm. It is found in the cytosol. The protein resides in the mitochondrion. Its subcellular location is the cell membrane. It catalyses the reaction creatine + ATP = N-phosphocreatine + ADP + H(+). Its function is as follows. Reversibly catalyzes the transfer of phosphate between ATP and various phosphogens (e.g. creatine phosphate). Creatine kinase isoenzymes play a central role in energy transduction in tissues with large, fluctuating energy demands, such as skeletal muscle, heart, brain and spermatozoa. Acts as a key regulator of adaptive thermogenesis as part of the futile creatine cycle: localizes to the mitochondria of thermogenic fat cells and acts by mediating phosphorylation of creatine to initiate a futile cycle of creatine phosphorylation and dephosphorylation. During the futile creatine cycle, creatine and N-phosphocreatine are in a futile cycle, which dissipates the high energy charge of N-phosphocreatine as heat without performing any mechanical or chemical work. This is Creatine kinase B-type (CKB) from Sus scrofa (Pig).